The primary structure comprises 305 residues: Glycine--tRNA ligase alpha subunit (305 aa).

The protein belongs to the class-II aminoacyl-tRNA synthetase family. In terms of assembly, tetramer of two alpha and two beta subunits.

The protein resides in the cytoplasm. The enzyme catalyses tRNA(Gly) + glycine + ATP = glycyl-tRNA(Gly) + AMP + diphosphate. This chain is Glycine--tRNA ligase alpha subunit, found in Streptococcus pneumoniae (strain 70585).